Consider the following 565-residue polypeptide: Bifunctional dihydrofolate reductase-thymidylate synthase 2 (565 aa).

The 178-residue stretch at Thr-65–Arg-242 folds into the DHFR domain. Val-69 contacts substrate. NADP(+)-binding positions include Ala-71 and Gly-77 to Lys-83. Asp-91 lines the substrate pocket. Residues Arg-115 to Thr-117 and Leu-136 to Ser-139 each bind NADP(+). Residue Ile-178 coordinates substrate. Gly-179–Glu-186 contributes to the NADP(+) binding site. Residue Thr-199 participates in substrate binding. A hinge region spans residues Ser-245 to His-280. Residues Glu-281–Val-565 are thymidylate synthase. Residue Arg-302 coordinates dUMP. Cys-447 is a catalytic residue. DUMP-binding positions include His-448, Gln-466–Asp-470, Asn-478, and His-508–Tyr-510.

In the N-terminal section; belongs to the dihydrofolate reductase family. It in the C-terminal section; belongs to the thymidylate synthase family. In terms of assembly, heterodimer or homodimer.

The catalysed reaction is (6S)-5,6,7,8-tetrahydrofolate + NADP(+) = 7,8-dihydrofolate + NADPH + H(+). It carries out the reaction dUMP + (6R)-5,10-methylene-5,6,7,8-tetrahydrofolate = 7,8-dihydrofolate + dTMP. It functions in the pathway cofactor biosynthesis; tetrahydrofolate biosynthesis; 5,6,7,8-tetrahydrofolate from 7,8-dihydrofolate: step 1/1. Functionally, bifunctional enzyme. Involved in de novo dTMP biosynthesis. Key enzyme in folate metabolism. Can play two different roles depending on the source of dihydrofolate: de novo synthesis of tetrahydrofolate or recycling of the dihydrofolate released as one of the end products of the TS catalyzed reaction. Catalyzes an essential reaction for de novo glycine and purine synthesis, DNA precursor synthesis, and for the conversion of dUMP to dTMP. The chain is Bifunctional dihydrofolate reductase-thymidylate synthase 2 (THY-2) from Arabidopsis thaliana (Mouse-ear cress).